We begin with the raw amino-acid sequence, 80 residues long: Conotoxin Ca11.3 (80 aa).

The signal sequence occupies residues 1-19 (MKLVLAIVVILMLLSLSTG). Positions 20-42 (AEMSDNHASRSATALRDRLLSPK) are excised as a propeptide. 4 disulfides stabilise this stretch: C46/C60, C53/C65, C59/C72, and C64/C79.

The protein belongs to the conotoxin I3 superfamily. As to expression, expressed by the venom duct.

It is found in the secreted. The polypeptide is Conotoxin Ca11.3 (Conus caracteristicus (Characteristic cone)).